The primary structure comprises 275 residues: Transcription factor Ovo-like 2 (275 aa).

The interval 15–101 is disordered; that stretch reads SVRSWDELPD…GHLATKQRPV (87 aa). Basic and acidic residues-rich tracts occupy residues 18 to 29 and 39 to 49; these read SWDELPDEKRAD and LLHDPPEDCRS. The span at 56–76 shows a compositional bias: low complexity; the sequence is GSGSSSAGEPGGAESSSSPHA. Positions 80-89 are enriched in acidic residues; the sequence is ETPEPGDAEG. C2H2-type zinc fingers lie at residues 119–141, 147–169, 175–198, and 214–237; these read HSCD…LKCH, HLCT…VRTH, YKCN…KKIH, and YVCE…NSAH. At S269 the chain carries Phosphoserine.

Belongs to the krueppel C2H2-type zinc-finger protein family. As to quaternary structure, interacts (via zinc-finger domains) with CEBPA (via bZIP domain); the interaction inhibits the transcription factor activity of CEBPA and is required to repress adipogenesis. Expressed in testis, ovary, heart and skeletal muscle. Expressed in the cornea, but absent from the corneal endothelium.

The protein localises to the nucleus. Functionally, zinc-finger transcription repressor factor. Plays a critical role in maintaining the identity of epithelial lineages by suppressing epithelial-to mesenchymal transition (EMT) mainly through the repression of ZEB1, an EMT inducer. Positively regulates neuronal differentiation. Suppresses cell cycling and terminal differentiation of keratinocytes by directly repressing MYC and NOTCH1. Important for the correct development of primordial germ cells in embryos. Plays dual functions in thermogenesis and adipogenesis to maintain energy balance. Essential for brown/beige adipose tissue-mediated thermogenesis, is necessary for the development of brown adipocytes. In white adipose tissues, limits adipogenesis by blocking CEBPA binding to its transcriptional targets and inhibiting its transcription factor activity. The polypeptide is Transcription factor Ovo-like 2 (Homo sapiens (Human)).